A 465-amino-acid chain; its full sequence is UDP-N-acetylmuramoylalanine--D-glutamate ligase (465 aa).

127–133 (GSNGKST) contributes to the ATP binding site.

It belongs to the MurCDEF family.

It localises to the cytoplasm. It catalyses the reaction UDP-N-acetyl-alpha-D-muramoyl-L-alanine + D-glutamate + ATP = UDP-N-acetyl-alpha-D-muramoyl-L-alanyl-D-glutamate + ADP + phosphate + H(+). It functions in the pathway cell wall biogenesis; peptidoglycan biosynthesis. In terms of biological role, cell wall formation. Catalyzes the addition of glutamate to the nucleotide precursor UDP-N-acetylmuramoyl-L-alanine (UMA). In Cereibacter sphaeroides (strain ATCC 17029 / ATH 2.4.9) (Rhodobacter sphaeroides), this protein is UDP-N-acetylmuramoylalanine--D-glutamate ligase.